We begin with the raw amino-acid sequence, 161 residues long: MNLAISIALLLTVLQVSRGQKVTSLTACLVDQSLRLDCRHENTSSSPIQYEFSLTRETKKHVLFGTVGVPEHTYRSRTNFTSKYNMKVLYLSAFTSKDEGTYTCALHHSGHSPPISSQNVTVLRDKLVKCEGISLLAQNTSWLLLLLLSLSLLQATDFMSL.

The first 19 residues, 1–19 (MNLAISIALLLTVLQVSRG), serve as a signal peptide directing secretion. Glutamine 20 carries the pyrrolidone carboxylic acid modification. In terms of domain architecture, Ig-like V-type spans 20 to 126 (QKVTSLTACL…SQNVTVLRDK (107 aa)). Intrachain disulfides connect cysteine 28-cysteine 130 and cysteine 38-cysteine 104. Residues asparagine 42 and asparagine 79 are each glycosylated (N-linked (GlcNAc...) asparagine). At serine 82 the chain carries Phosphoserine. An N-linked (GlcNAc...) asparagine glycan is attached at asparagine 119. Cysteine 130 is lipidated: GPI-anchor amidated cysteine; alternate. The propeptide at 131–161 (EGISLLAQNTSWLLLLLLSLSLLQATDFMSL) is removed in mature form. A glycan (N-linked (GlcNAc...) asparagine) is linked at asparagine 139.

The protein localises to the cell membrane. May play a role in cell-cell or cell-ligand interactions during synaptogenesis and other events in the brain. This is Thy-1 membrane glycoprotein (THY1) from Homo sapiens (Human).